Here is a 182-residue protein sequence, read N- to C-terminus: MRILGIDPGLQTTGFGVVDVDGHHLSYVASGTIRTTGAALGDLPGRLKILFDGITEVAARYQPDVATVEIVFVNVNPQSTLLLGQARGACVTALVASRLPVAEYTALQMKKAVVGHGRAAKSQVQEMVRRLLQLPGLPGTDAADALGLAITHAHAGAAMARLGEATSLNRRQHAMYRSGRAL.

Catalysis depends on residues D7, E69, and D141. Mg(2+) contacts are provided by D7, E69, and D141.

This sequence belongs to the RuvC family. Homodimer which binds Holliday junction (HJ) DNA. The HJ becomes 2-fold symmetrical on binding to RuvC with unstacked arms; it has a different conformation from HJ DNA in complex with RuvA. In the full resolvosome a probable DNA-RuvA(4)-RuvB(12)-RuvC(2) complex forms which resolves the HJ. Mg(2+) serves as cofactor.

The protein localises to the cytoplasm. The enzyme catalyses Endonucleolytic cleavage at a junction such as a reciprocal single-stranded crossover between two homologous DNA duplexes (Holliday junction).. Functionally, the RuvA-RuvB-RuvC complex processes Holliday junction (HJ) DNA during genetic recombination and DNA repair. Endonuclease that resolves HJ intermediates. Cleaves cruciform DNA by making single-stranded nicks across the HJ at symmetrical positions within the homologous arms, yielding a 5'-phosphate and a 3'-hydroxyl group; requires a central core of homology in the junction. The consensus cleavage sequence is 5'-(A/T)TT(C/G)-3'. Cleavage occurs on the 3'-side of the TT dinucleotide at the point of strand exchange. HJ branch migration catalyzed by RuvA-RuvB allows RuvC to scan DNA until it finds its consensus sequence, where it cleaves and resolves the cruciform DNA. The protein is Crossover junction endodeoxyribonuclease RuvC of Paracidovorax citrulli (strain AAC00-1) (Acidovorax citrulli).